Consider the following 721-residue polypeptide: Xylosyl- and glucuronyltransferase LARGE2 (721 aa).

The Cytoplasmic segment spans residues 1-8 (MLPRGRPR). A helical; Signal-anchor for type II membrane protein membrane pass occupies residues 9-29 (ALGAAALLLLLLLLGFLLFGG). Residues 30–721 (DLGCERREPG…LQQPQSPARG (692 aa)) lie on the Lumenal side of the membrane. Residues 59 to 89 (DGRLRRAAALDGDPGAGPGDHNRSDCGPQPP) form a disordered region. N80 and N107 each carry an N-linked (GlcNAc...) asparagine glycan. Residues 97 to 372 (LHVAIVCAGH…FLEYDGNLLR (276 aa)) are xylosyltransferase activity. Mn(2+) contacts are provided by D201 and D203. N-linked (GlcNAc...) asparagine glycosylation occurs at N231. The glucuronyltransferase activity stretch occupies residues 373-715 (RELFVCPSQP…LKYLPALQQP (343 aa)). D521 and D523 together coordinate Mn(2+).

This sequence in the C-terminal section; belongs to the glycosyltransferase 49 family. In the N-terminal section; belongs to the glycosyltransferase 8 family. In terms of assembly, interacts with B4GAT1. Requires Mn(2+) as cofactor. Widely expressed. Expressed at high level in placenta, pancreas and kidney compared to LARGE. Not expressed in brain.

It localises to the golgi apparatus membrane. It catalyses the reaction 3-O-[beta-D-GlcA-(1-&gt;3)-beta-D-Xyl-(1-&gt;4)-Rib-ol-P-Rib-ol-P-3-beta-D-GalNAc-(1-&gt;3)-beta-D-GlcNAc-(1-&gt;4)-(O-6-P-alpha-D-Man)]-Thr-[protein] + UDP-alpha-D-xylose = 3-O-[alpha-D-Xyl-(1-&gt;3)-beta-D-GlcA-(1-&gt;4)-beta-D-Xyl-(1-&gt;4)-Rib-ol-P-Rib-ol-P-3-beta-D-GalNAc-(1-&gt;3)-beta-D-GlcNAc-(1-&gt;4)-(O-6-P-alpha-D-Man)]-Thr-[protein] + UDP + H(+). It carries out the reaction 3-O-{(1-&gt;[3)-alpha-D-Xyl-(1-&gt;3)-beta-D-GlcA-(1-&gt;](n)-4)-beta-D-Xyl-(1-&gt;4)-Rib-ol-P-Rib-ol-P-3-beta-D-GalNAc-(1-&gt;3)-beta-D-GlcNAc-(1-&gt;4)-O-6-P-alpha-D-Man}-L-Thr-[protein] + UDP-alpha-D-glucuronate = 3-O-{beta-D-GlcA-(1-&gt;[3)-alpha-D-Xyl-(1-&gt;3)-beta-D-GlcA-(1-&gt;](n)-4)-beta-D-Xyl-(1-&gt;4)-Rib-ol-P-Rib-ol-P-3-beta-D-GalNAc-(1-&gt;3)-beta-D-GlcNAc-(1-&gt;4)-O-6-P-alpha-D-Man}-L-Thr-[protein] + UDP + H(+). The catalysed reaction is 3-O-{beta-D-GlcA-(1-&gt;[3)-alpha-D-Xyl-(1-&gt;3)-beta-D-GlcA-(1-&gt;](n)-4)-beta-D-Xyl-(1-&gt;4)-Rib-ol-P-Rib-ol-P-3-beta-D-GalNAc-(1-&gt;3)-beta-D-GlcNAc-(1-&gt;4)-O-6-P-alpha-D-Man}-L-Thr-[protein] + UDP-alpha-D-xylose = 3-O-{(1-&gt;[3)-alpha-D-Xyl-(1-&gt;3)-beta-D-GlcA-(1-&gt;](n+1)-4)-beta-D-Xyl-(1-&gt;4)-Rib-ol-P-Rib-ol-P-3-beta-D-GalNAc-(1-&gt;3)-beta-D-GlcNAc-(1-&gt;4)-O-6-P-alpha-D-Man}-L-Thr-[protein] + UDP + H(+). It functions in the pathway protein modification; protein glycosylation. In terms of biological role, bifunctional glycosyltransferase with both alpha-1,3-xylosyltransferase and beta-1,3-glucuronyltransferase activities involved in the maturation of alpha-dystroglycan (DAG1) by glycosylation leading to DAG1 binding to laminin G-like domain-containing extracellular proteins with high affinity and in a phosphorylated-O-mannosyl trisaccharide dependent manner. Elongates the glucuronyl-beta-1,4-xylose-beta disaccharide primer structure by adding repeating units [-3-Xylose-alpha-1,3-GlcA-beta-1-] to produce a heteropolysaccharide. Supports the maturation of DAG1 more effectively than LARGE1. In addition, can modify both heparan sulfate (HS)- and chondroitin/dermatan sulfate (CS/DS)-proteoglycans (PGs), namely GPC4, with a glycosaminoglycan (GAG)-like polysaccharide composed of xylose and glucuronic acid to confer laminin binding. This Homo sapiens (Human) protein is Xylosyl- and glucuronyltransferase LARGE2.